A 180-amino-acid polypeptide reads, in one-letter code: Molybdopterin synthase catalytic subunit (180 aa).

Substrate is bound by residues 123-124 (HR), Lys139, and 146-148 (KLE). Positions 161–180 (RDGQKGVKVEGGKEGVEAKH) are disordered.

This sequence belongs to the MoaE family. MOCS2B subfamily. Heterotetramer; composed of 2 small (MOCS2A) and 2 large (MOCS2B) subunits.

The protein localises to the cytoplasm. It catalyses the reaction 2 [molybdopterin-synthase sulfur-carrier protein]-C-terminal-Gly-aminoethanethioate + cyclic pyranopterin phosphate + H2O = molybdopterin + 2 [molybdopterin-synthase sulfur-carrier protein]-C-terminal Gly-Gly + 2 H(+). Its pathway is cofactor biosynthesis; molybdopterin biosynthesis. Functionally, catalytic subunit of the molybdopterin synthase complex, a complex that catalyzes the conversion of precursor Z into molybdopterin. Acts by mediating the incorporation of 2 sulfur atoms from thiocarboxylated MOCS2A into precursor Z to generate a dithiolene group. This Pyrenophora tritici-repentis (strain Pt-1C-BFP) (Wheat tan spot fungus) protein is Molybdopterin synthase catalytic subunit.